A 231-amino-acid chain; its full sequence is Probable glutathione S-transferase GSTU1 (231 aa).

A GST N-terminal domain is found at 5 to 84; it reads KELVLLDFWV…YLDDAFPGTP (80 aa). Glutathione is bound by residues S15, K42, I56, and 68 to 69; that span reads ES. The 124-residue stretch at 97–220 folds into the GST C-terminal domain; it reads AAYARATARF…LPSPEKVYDF (124 aa).

The protein belongs to the GST superfamily. Tau family.

It catalyses the reaction RX + glutathione = an S-substituted glutathione + a halide anion + H(+). Conjugation of reduced glutathione to a wide number of exogenous and endogenous hydrophobic electrophiles. In Oryza sativa subsp. indica (Rice), this protein is Probable glutathione S-transferase GSTU1 (GSTU1).